Consider the following 130-residue polypeptide: Interferon alpha-inducible protein 27-like protein 2 (130 aa).

3 helical membrane passes run 8 to 28, 43 to 63, and 66 to 86; these read AAVGGALAVGAVPVVLSAMGF, MSAAAIANGGGVSAGSLVATL, and VGAAGLSTSSNILLASVGSVL. Residues 93–130 are disordered; that stretch reads SPSSSLPAEPEAKEDEARENVPQGEPPKPPLKSEKHEE.

The protein belongs to the IFI6/IFI27 family.

The protein localises to the mitochondrion membrane. In terms of biological role, plays a role in the apoptotic process and has a pro-apoptotic activity. This Homo sapiens (Human) protein is Interferon alpha-inducible protein 27-like protein 2.